A 290-amino-acid polypeptide reads, in one-letter code: MKVCIISILGRPNVGKSSLLNKIIKYDLAIVSNVPQTTRDQIMGVYTEDGYQFVFVDTPGIHKPLNLLGESLNKEAFSSLKDIDCVLFLSPVNEDIKSGDKLILERITNAKNKIAVISKIDLAKSPDEIAKKIDGLKEYGFNKIISVSNKNDKSVDSLIEILKEYAYNAPPFYDEDYITDKSMRFMAKEYIRESAINLLTDELPHSIAVEVQDFIEEDDRITINAIIYVKKDSQKGILIGKGASMIKKIGTNARMKMSHQFDTKVTLNLKVKVSNKWINDKSALKKFGYN.

The region spanning Lys-2 to Asn-168 is the Era-type G domain. Positions Gly-10 to Ser-17 are G1. Gly-10–Ser-17 is a GTP binding site. Positions Gln-36–Asp-40 are G2. The tract at residues Asp-57–Gly-60 is G3. GTP is bound by residues Asp-57–Ile-61 and Ser-118–Asp-121. The interval Ser-118 to Asp-121 is G4. The tract at residues Val-147 to Asn-149 is G5. The region spanning Leu-199 to Asn-275 is the KH type-2 domain.

This sequence belongs to the TRAFAC class TrmE-Era-EngA-EngB-Septin-like GTPase superfamily. Era GTPase family. In terms of assembly, monomer.

The protein resides in the cytoplasm. The protein localises to the cell membrane. Functionally, an essential GTPase that binds both GDP and GTP, with rapid nucleotide exchange. Plays a role in 16S rRNA processing and 30S ribosomal subunit biogenesis and possibly also in cell cycle regulation and energy metabolism. In Mycoplasmopsis agalactiae (strain NCTC 10123 / CIP 59.7 / PG2) (Mycoplasma agalactiae), this protein is GTPase Era.